A 563-amino-acid polypeptide reads, in one-letter code: Lipase 1 (563 aa).

Positions 1 to 19 (MVSKTFFLAAALNVVGTLA) are cleaved as a signal peptide. Gln20 carries the pyrrolidone carboxylic acid modification. Cys80 and Cys124 are oxidised to a cystine. Ser236 acts as the Acyl-ester intermediate in catalysis. The cysteines at positions 295 and 307 are disulfide-linked. Asn302 is a glycosylation site (N-linked (GlcNAc...) asparagine). Residue Glu373 is the Charge relay system of the active site. Asn383 carries an N-linked (GlcNAc...) asparagine glycan. The Charge relay system role is filled by His482.

Belongs to the type-B carboxylesterase/lipase family. Monomer.

Its subcellular location is the secreted. It carries out the reaction a triacylglycerol + H2O = a diacylglycerol + a fatty acid + H(+). Hydrolyzes all ester bonds in triglyceride and displays a high affinity for triolein. For unsaturated substrates having long fatty acyl chains (C18:2 cis-9, cis-12 and C18:3 cis-9, cis-12, cis-15) GCL I shows higher specific activity than GCL II, whereas GCL II shows higher specific activity against saturated substrates having short fatty acid chains (C8, C10, C12 and C14). This chain is Lipase 1 (LIP1), found in Geotrichum candidum (Oospora lactis).